The chain runs to 278 residues: Digeranylgeranylglyceryl phosphate synthase (278 aa).

8 helical membrane passes run 12 to 32, 34 to 54, 92 to 112, 129 to 149, 153 to 173, 204 to 224, 226 to 246, and 257 to 277; these read LKNC…ASYF, LAMV…CGFG, LVVM…MAVL, IIGN…GGIA, IDVT…REII, FLLI…FFGI, YMIS…KLVF, and SRNI…GSLF.

The protein belongs to the UbiA prenyltransferase family. DGGGP synthase subfamily. Mg(2+) is required as a cofactor.

The protein resides in the cell membrane. The catalysed reaction is sn-3-O-(geranylgeranyl)glycerol 1-phosphate + (2E,6E,10E)-geranylgeranyl diphosphate = 2,3-bis-O-(geranylgeranyl)-sn-glycerol 1-phosphate + diphosphate. Its pathway is membrane lipid metabolism; glycerophospholipid metabolism. Functionally, prenyltransferase that catalyzes the transfer of the geranylgeranyl moiety of geranylgeranyl diphosphate (GGPP) to the C2 hydroxyl of (S)-3-O-geranylgeranylglyceryl phosphate (GGGP). This reaction is the second ether-bond-formation step in the biosynthesis of archaeal membrane lipids. This Methanococcus maripaludis (strain DSM 14266 / JCM 13030 / NBRC 101832 / S2 / LL) protein is Digeranylgeranylglyceryl phosphate synthase.